Reading from the N-terminus, the 270-residue chain is Protein ABHD14A (270 aa).

The helical; Signal-anchor for type II membrane protein transmembrane segment at 9-29 (LVVLGLVLLATVLLYLLLPSM) threads the bilayer. Asn61 is a glycosylation site (N-linked (GlcNAc...) asparagine). Active-site charge relay system residues include Ser170 and Asp221. Asn237 is a glycosylation site (N-linked (GlcNAc...) asparagine). His248 acts as the Charge relay system in catalysis.

This sequence belongs to the AB hydrolase superfamily. ABHD14 family.

The protein resides in the cytoplasm. Its subcellular location is the membrane. Possible role in granule neuron development. This is Protein ABHD14A from Danio rerio (Zebrafish).